A 273-amino-acid chain; its full sequence is Shikimate dehydrogenase (NADP(+)) (273 aa).

Residues 14-16 (SKS) and Thr-61 contribute to the shikimate site. The active-site Proton acceptor is the Lys-65. Asn-86 and Asp-102 together coordinate shikimate. Residues 126-130 (GAGGA), 150-155 (NRTHAR), and Met-213 contribute to the NADP(+) site. Position 215 (Tyr-215) interacts with shikimate. Gly-237 contributes to the NADP(+) binding site.

Belongs to the shikimate dehydrogenase family. In terms of assembly, homodimer.

It carries out the reaction shikimate + NADP(+) = 3-dehydroshikimate + NADPH + H(+). The protein operates within metabolic intermediate biosynthesis; chorismate biosynthesis; chorismate from D-erythrose 4-phosphate and phosphoenolpyruvate: step 4/7. In terms of biological role, involved in the biosynthesis of the chorismate, which leads to the biosynthesis of aromatic amino acids. Catalyzes the reversible NADPH linked reduction of 3-dehydroshikimate (DHSA) to yield shikimate (SA). In Aeromonas hydrophila subsp. hydrophila (strain ATCC 7966 / DSM 30187 / BCRC 13018 / CCUG 14551 / JCM 1027 / KCTC 2358 / NCIMB 9240 / NCTC 8049), this protein is Shikimate dehydrogenase (NADP(+)).